Here is a 106-residue protein sequence, read N- to C-terminus: Large ribosomal subunit protein bL21 (106 aa).

The protein belongs to the bacterial ribosomal protein bL21 family. As to quaternary structure, part of the 50S ribosomal subunit. Contacts protein L20.

Functionally, this protein binds to 23S rRNA in the presence of protein L20. The protein is Large ribosomal subunit protein bL21 of Coprothermobacter proteolyticus (strain ATCC 35245 / DSM 5265 / OCM 4 / BT).